A 1561-amino-acid polypeptide reads, in one-letter code: Synemin (1561 aa).

The tract at residues 1 to 10 (MLSWRLQTGS) is head. The tract at residues 11 to 49 (EKAELQELNARLYDYVCRVRELERENLLLEEELRSRLSR) is coil 1A. Residues 11–320 (EKAELQELNA…YRALLEGESN (310 aa)) are interaction with DMD and UTRN. Positions 11–322 (EKAELQELNA…ALLEGESNPE (312 aa)) constitute an IF rod domain. Residues 50–58 (EDRWAEDQA) are linker 1. The coil 1B stretch occupies residues 59–163 (LYAEEARSLR…DLRARAASLT (105 aa)). Positions 164–186 (MHFRARATSPAAPPPRLRDVHDS) are linker 12. A coil 2 region spans residues 187 to 300 (YALLVAESWR…LRDYQELLQV (114 aa)). The interval 301-1561 (KTGLSLEVAT…EEEEEGEGWF (1261 aa)) is tail. Polar residues-rich tracts occupy residues 371–390 (SSASYSNWPGHLDSQTTTAV) and 401–421 (SRHSSSATTSGQQKPLEKTIS). Disordered stretches follow at residues 371–421 (SSAS…KTIS), 549–574 (DARKRESRHLRDEAREKEALKERSVK), and 591–637 (EVST…DSTT). The segment covering 601-624 (GRKDVSHSGGREAETKETRFRLDT) has biased composition (basic and acidic residues). Polar residues predominate over residues 625-637 (QDTASSLQSDSTT). Position 653 is a phosphothreonine (T653). 9 positions are modified to phosphoserine: S655, S778, S780, S1044, S1049, S1077, S1087, S1179, and S1182. Disordered stretches follow at residues 1033–1061 (SVVRESLAKRSSPVPRSPDREDGEEVPAG) and 1075–1099 (SPSGERDDAGQVSPSSDQRVTQGPV). Positions 1086–1099 (VSPSSDQRVTQGPV) are enriched in polar residues. The tract at residues 1152-1453 (VSGDFSEAVS…GPKETSFTFQ (302 aa)) is interaction with TLN1 and VCL. The tract at residues 1212–1231 (ADISGSGRMPGSERSHTEKE) is disordered. Over residues 1222–1231 (GSERSHTEKE) the composition is skewed to basic and acidic residues. Residues 1242–1557 (AQVGGNFATE…DNEEEEEEEG (316 aa)) form an interaction with DMD and UTRN region. S1425 is subject to Phosphoserine. R1481 bears the Omega-N-methylarginine mark. A disordered region spans residues 1491-1519 (DERVASTGSGASPGDAHQAPGEKGTEQAG).

Belongs to the intermediate filament family. In terms of assembly, interacts with DES, DMD, DTNA, TLN1, UTRN and VCL. Isoform 1 and isoform 2 interact with GFAP and VIM. Isoform 2 and isoform 3 are detected in adult skeletal muscle, heart and bladder, whereas isoform 1 is only detected in adult bladder (at protein level).

The protein localises to the cytoplasm. It is found in the cytoskeleton. It localises to the cell junction. Its subcellular location is the adherens junction. Type-VI intermediate filament (IF) which plays an important cytoskeletal role within the muscle cell cytoskeleton. It forms heteromeric IFs with desmin and/or vimentin, and via its interaction with cytoskeletal proteins alpha-dystrobrevin, dystrophin, talin-1, utrophin and vinculin, is able to link these heteromeric IFs to adherens-type junctions, such as to the costameres, neuromuscular junctions, and myotendinous junctions within striated muscle cells. This chain is Synemin, found in Mus musculus (Mouse).